The primary structure comprises 502 residues: Histidine--tRNA ligase (502 aa).

The protein belongs to the class-II aminoacyl-tRNA synthetase family. Homodimer.

It localises to the cytoplasm. The catalysed reaction is tRNA(His) + L-histidine + ATP = L-histidyl-tRNA(His) + AMP + diphosphate + H(+). This is Histidine--tRNA ligase from Brucella suis (strain ATCC 23445 / NCTC 10510).